Reading from the N-terminus, the 127-residue chain is Small ribosomal subunit protein uS11 (127 aa).

This sequence belongs to the universal ribosomal protein uS11 family. Part of the 30S ribosomal subunit.

Located on the platform of the 30S subunit. This is Small ribosomal subunit protein uS11 from Picrophilus torridus (strain ATCC 700027 / DSM 9790 / JCM 10055 / NBRC 100828 / KAW 2/3).